A 275-amino-acid polypeptide reads, in one-letter code: Autophagy protein 5 (275 aa).

The residue at position 1 (methionine 1) is an N-acetylmethionine. Lysine 130 is covalently cross-linked (Glycyl lysine isopeptide (Lys-Gly) (interchain with G-Cter in ATG12)).

It belongs to the ATG5 family. Forms a conjugate with ATG12. Part of the minor complex composed of 4 sets of ATG12-ATG5 and ATG16L1 (400 kDa); this complex interacts with ATG3 leading to disruption of ATG7 interaction and promotion of ATG8-like proteins lipidation. Forms an 800-kDa complex composed of ATG12-ATG5 and ATG16L2. The ATG12-ATG5 conjugate interacts with RAB33A; this interaction is bridged by ATG16L1 and promotes ATG12-ATG5-ATG16L1 complex recruitment to phagophores. Interacts with TECPR1; the interaction is direct and does not take place when ATG16L1 is associated with the ATG5-ATG12 conjugate. Interacts with DHX58/RIG-1, IFIH1/MDA5 and MAVS/IPS-1 in monomeric form as well as in ATG12-ATG5 conjugate form. The interaction with MAVS is further enhanced upon vesicular stomatitis virus (VSV) infection. Interacts with ATG3. Interacts with ATG7 and ATG10. Interacts with FADD. Interacts with Bassoon/BSN; this interaction is important for the regulation of presynaptic autophagy. Interacts with ATG16L2. In terms of processing, conjugated to ATG12; which is essential for autophagy, but is not required for association with isolation membrane. Acetylated by EP300.

It is found in the cytoplasm. The protein localises to the preautophagosomal structure membrane. Functionally, involved in autophagic vesicle formation. Conjugation with ATG12, through a ubiquitin-like conjugating system involving ATG7 as an E1-like activating enzyme and ATG10 as an E2-like conjugating enzyme, is essential for its function. The ATG12-ATG5 conjugate acts as an E3-like enzyme which is required for lipidation of ATG8 family proteins and their association to the vesicle membranes. Involved in mitochondrial quality control after oxidative damage, and in subsequent cellular longevity. Plays a critical role in multiple aspects of lymphocyte development and is essential for both B and T lymphocyte survival and proliferation. Required for optimal processing and presentation of antigens for MHC II. Involved in the maintenance of axon morphology and membrane structures, as well as in normal adipocyte differentiation. Promotes primary ciliogenesis through removal of OFD1 from centriolar satellites and degradation of IFT20 via the autophagic pathway. As part of the ATG8 conjugation system with ATG12 and ATG16L1, required for recruitment of LRRK2 to stressed lysosomes and induction of LRRK2 kinase activity in response to lysosomal stress. May play an important role in the apoptotic process, possibly within the modified cytoskeleton. Its expression is a relatively late event in the apoptotic process, occurring downstream of caspase activity. Plays a crucial role in IFN-gamma-induced autophagic cell death by interacting with FADD. This Sus scrofa (Pig) protein is Autophagy protein 5.